A 101-amino-acid chain; its full sequence is uncharacterized protein (101 aa).

2 consecutive transmembrane segments (helical) span residues 10 to 30 (VLAI…IGSI) and 67 to 87 (IILG…ILSI).

The protein localises to the membrane. This is an uncharacterized protein from Acanthamoeba polyphaga (Amoeba).